Here is a 251-residue protein sequence, read N- to C-terminus: MSDSNLDEVLVLIPARMASTRLPGKPLADICGLPMIVQVAMRAKEAAIGRVVVAVDDQQVFDAVSAAGFDVVMTSSDHQSGSDRIFEALTKVDPDGKAKFIVNVQGDLPTIDPQTVRAALRPLENEAVDIGTLTTEIDDEDDKTAPHIVKIVGSPVSDTRLHALYFTRATAPHGKGPLYHHIGLYAYRRAALERFVSLGPSTLERRESLEQLRALEAGMRIDVEIVDTVPLGVDTPADLEKARRILSARTG.

Belongs to the KdsB family.

Its subcellular location is the cytoplasm. It carries out the reaction 3-deoxy-alpha-D-manno-oct-2-ulosonate + CTP = CMP-3-deoxy-beta-D-manno-octulosonate + diphosphate. Its pathway is nucleotide-sugar biosynthesis; CMP-3-deoxy-D-manno-octulosonate biosynthesis; CMP-3-deoxy-D-manno-octulosonate from 3-deoxy-D-manno-octulosonate and CTP: step 1/1. It participates in bacterial outer membrane biogenesis; lipopolysaccharide biosynthesis. Activates KDO (a required 8-carbon sugar) for incorporation into bacterial lipopolysaccharide in Gram-negative bacteria. This chain is 3-deoxy-manno-octulosonate cytidylyltransferase, found in Rhizobium etli (strain CIAT 652).